The sequence spans 564 residues: Cysteine--tRNA ligase CPS1, chloroplastic/mitochondrial (564 aa).

The N-terminal 43 residues, 1-43, are a transit peptide targeting the chloroplast and mitochondrion; that stretch reads MAAAVVVRRAAGLIPLLSSRFGARMPLHRALSQIPPPRFCRLL. A Zn(2+)-binding site is contributed by Cys93. A 'HIGH' region motif is present at residues 95 to 105; that stretch reads VTPYDDSHIGH. The Zn(2+) site is built by Cys273, His298, and Glu302. Positions 330-334 match the 'KMSKS' region motif; that stretch reads KMSKS. Lys333 contacts ATP.

This sequence belongs to the class-I aminoacyl-tRNA synthetase family. The cofactor is Zn(2+).

It is found in the plastid. It localises to the chloroplast. The protein resides in the mitochondrion. It catalyses the reaction tRNA(Cys) + L-cysteine + ATP = L-cysteinyl-tRNA(Cys) + AMP + diphosphate. Functionally, nuclear genome-encoded factor required for normal assembly of chloroplast polysomes. The polypeptide is Cysteine--tRNA ligase CPS1, chloroplastic/mitochondrial (Zea mays (Maize)).